A 706-amino-acid polypeptide reads, in one-letter code: MSGGKSGSRLSAYSHLKEIGKGGFGVVYAAQRENGEKVAIKRIDKKVPKNRVWTEIQTMKELKKSKYVVEFYEDFVEDGYTYIVMELCEGGSLQAYVREHGALDDATAVHVLRQLISAVSFMHRVNVIHRDLSAGNVFIKDSKKKKMTVKLGDFGLATTLGRGETTCTIVGTPGFIAPQVYDQEYTQSADVYSLGAVLYTMLTARNPPPKGLPPTCGMSPNAARLVEQMMDTDAKKRIPLTQIVLSEFMYENTNENAVIFSREHSRDGRRQRSREPVRSSRDDRSRDGRALIRSSSQPAHSGRAPLSNRPIHDRMPSTSSRGFDSERGRERDRDSGRGTVPPSREDRNRSQLWPIRMDRLEGQRVCTAGGRYIVELDTRCRFEVAAQGNFVKRILIVEVDEMVQTVYVHRIPDRTVRGRNGEEELITLTNNPFVYTSYSQMPKEVQNDYMRLQKMVAVTISGRVAKVTFRRPSQFPDAQAQLMENGDLRIKLPRSVIVRKMDNGEIFNCIDGIATQKQAVSGITLTKVNEVYKYLIRFEQCLNGMDRGMVCFPIVFSAGTNMVGSSPSSLMPSGSSQTSRFPFSNLSNNQPSLVPHSAPFLTKPTSSQRASSANVQRRVSTDENSSPSVAPSKYKIKIDPTTQKVRSIQATDGRVLRCSTSKADQFIFTDPAIRPDDQRFMRTDRVPDRASEMLHTLCERMRKLHQ.

The Protein kinase domain maps to 13–249 (YSHLKEIGKG…LTQIVLSEFM (237 aa)). Residues 19–27 (IGKGGFGVV) and Lys41 each bind ATP. Catalysis depends on Asp131, which acts as the Proton acceptor. Basic and acidic residues-rich tracts occupy residues 261 to 290 (SREH…DGRA) and 323 to 336 (FDSE…RDSG). Disordered regions lie at residues 261-351 (SREH…NRSQ) and 566-632 (SPSS…VAPS). A compositionally biased stretch (low complexity) spans 566 to 579 (SPSSLMPSGSSQTS). Polar residues-rich tracts occupy residues 580–592 (RFPF…NQPS) and 603–629 (KPTS…SPSV).

The protein belongs to the protein kinase superfamily. Ser/Thr protein kinase family. Interacts with sel-10. In terms of processing, probably ubiquitinated by the SCF(sel-10) and SCF(lin-23) E3 ubiquitin ligase complexes, leading to its proteasomal degradation.

Its subcellular location is the cytoplasm. It localises to the cytoskeleton. The protein localises to the microtubule organizing center. The protein resides in the centrosome. It is found in the centriole. It catalyses the reaction L-seryl-[protein] + ATP = O-phospho-L-seryl-[protein] + ADP + H(+). It carries out the reaction L-threonyl-[protein] + ATP = O-phospho-L-threonyl-[protein] + ADP + H(+). Its function is as follows. Protein kinase that plays a central role in centrosome duplication, control of centrosome size, spindle formation and nuclear envelope breakdown during cell divisions. Paternal copy is required to regulate synthesis of daughter centrioles prior to fertilization. Maternal copy regulates centrosome duplication during later cell cycles. Functions upstream of sas-5 and sas-6, and is required for their localization to the centrosome. Its role in nuclear envelope breakdown is mediated by the spindly-like protein spdl-1 and the RZZ complex, which in turn recruits the spindle checkpoint proteins mdf-1 and mdf-2, dynein and dynactin to unattached kinetochores. In Caenorhabditis elegans, this protein is Probable serine/threonine-protein kinase zyg-1.